The following is a 245-amino-acid chain: 4-hydroxy-tetrahydrodipicolinate reductase (245 aa).

Residues Gly-7 to Val-12, Asp-33, Gly-75 to Thr-77, and Ala-102 to Phe-105 contribute to the NAD(+) site. The active-site Proton donor/acceptor is His-132. His-133 is a (S)-2,3,4,5-tetrahydrodipicolinate binding site. Lys-136 serves as the catalytic Proton donor. Gly-142 to Thr-143 serves as a coordination point for (S)-2,3,4,5-tetrahydrodipicolinate.

This sequence belongs to the DapB family.

The protein resides in the cytoplasm. The catalysed reaction is (S)-2,3,4,5-tetrahydrodipicolinate + NAD(+) + H2O = (2S,4S)-4-hydroxy-2,3,4,5-tetrahydrodipicolinate + NADH + H(+). It carries out the reaction (S)-2,3,4,5-tetrahydrodipicolinate + NADP(+) + H2O = (2S,4S)-4-hydroxy-2,3,4,5-tetrahydrodipicolinate + NADPH + H(+). It participates in amino-acid biosynthesis; L-lysine biosynthesis via DAP pathway; (S)-tetrahydrodipicolinate from L-aspartate: step 4/4. Functionally, catalyzes the conversion of 4-hydroxy-tetrahydrodipicolinate (HTPA) to tetrahydrodipicolinate. The polypeptide is 4-hydroxy-tetrahydrodipicolinate reductase (Mycolicibacterium paratuberculosis (strain ATCC BAA-968 / K-10) (Mycobacterium paratuberculosis)).